The sequence spans 240 residues: Large ribosomal subunit protein uL2 (240 aa).

Residues 199–240 form a disordered region; that stretch reads DHPFGGGGRQHPGRPKSVSRDAAPGRKVGDIASKRTGRGGNE. Basic and acidic residues predominate over residues 221-231; it reads APGRKVGDIAS.

Belongs to the universal ribosomal protein uL2 family. Part of the 50S ribosomal subunit. Forms a bridge to the 30S subunit in the 70S ribosome.

One of the primary rRNA binding proteins. Required for association of the 30S and 50S subunits to form the 70S ribosome, for tRNA binding and peptide bond formation. It has been suggested to have peptidyltransferase activity; this is somewhat controversial. Makes several contacts with the 16S rRNA in the 70S ribosome. This Halobacterium salinarum (strain ATCC 29341 / DSM 671 / R1) protein is Large ribosomal subunit protein uL2.